Consider the following 153-residue polypeptide: UPF0178 protein Ccel_2994 (153 aa).

This sequence belongs to the UPF0178 family.

The protein is UPF0178 protein Ccel_2994 of Ruminiclostridium cellulolyticum (strain ATCC 35319 / DSM 5812 / JCM 6584 / H10) (Clostridium cellulolyticum).